The sequence spans 437 residues: Double-stranded RNA-binding protein 3 (437 aa).

Residues 1–22 are disordered; the sequence is MKKKSAPTPLPPETANTSPAPI. DRBM domains follow at residues 35–104 and 120–187; these read VFKS…EIVK and LCKN…AIQG. 2 stretches are compositionally biased toward basic and acidic residues: residues 288–310 and 320–330; these read AKRV…ENQH and DEARVEQEPSR. The disordered stretch occupies residues 288–331; sequence AKRVEDEPPRDIEMVQPDKENQHSDAALVQPDDEARVEQEPSRD.

Functionally, binds double-stranded RNA. The polypeptide is Double-stranded RNA-binding protein 3 (DRB3) (Oryza sativa subsp. japonica (Rice)).